The sequence spans 227 residues: Orotate phosphoribosyltransferase (227 aa).

Lysine 34 is a binding site for 5-phospho-alpha-D-ribose 1-diphosphate. 42–43 (FF) provides a ligand contact to orotate. 5-phospho-alpha-D-ribose 1-diphosphate contacts are provided by residues 80–81 (YK), arginine 106, lysine 107, lysine 110, histidine 112, and 131–139 (DDVISAGTS). Positions 135 and 163 each coordinate orotate.

Belongs to the purine/pyrimidine phosphoribosyltransferase family. PyrE subfamily. Homodimer. Mg(2+) is required as a cofactor.

The catalysed reaction is orotidine 5'-phosphate + diphosphate = orotate + 5-phospho-alpha-D-ribose 1-diphosphate. Its pathway is pyrimidine metabolism; UMP biosynthesis via de novo pathway; UMP from orotate: step 1/2. Functionally, catalyzes the transfer of a ribosyl phosphate group from 5-phosphoribose 1-diphosphate to orotate, leading to the formation of orotidine monophosphate (OMP). The polypeptide is Orotate phosphoribosyltransferase (Cupriavidus necator (strain ATCC 17699 / DSM 428 / KCTC 22496 / NCIMB 10442 / H16 / Stanier 337) (Ralstonia eutropha)).